Reading from the N-terminus, the 984-residue chain is Ephrin type-B receptor 1 (984 aa).

The Eph LBD domain occupies 1–182 (ETLMDTRTAT…FFKKCPSVVQ (182 aa)). Topologically, residues 1 to 541 (ETLMDTRTAT…KSELREQLPL (541 aa)) are extracellular. Fibronectin type-III domains are found at residues 303-413 (VPSG…TNQA) and 414-528 (APST…TLTD). 3 N-linked (GlcNAc...) asparagine glycosylation sites follow: Asn315, Asn407, and Asn480. A helical membrane pass occupies residues 542 to 562 (IAGSAAAGVVFIVSLVAISIV). Residues 563–984 (CSRKRAYSKE…QMSQSPTSMA (422 aa)) are Cytoplasmic-facing. A Protein kinase domain is found at 619–882 (VKIEEVIGAG…EIVNTLDKMI (264 aa)). Residues 625–633 (IGAGEFGEV) and Lys651 each bind ATP. Asp744 serves as the catalytic Proton acceptor. The SAM domain maps to 911-975 (TAFTSVEDWL…LNSIQSMRVQ (65 aa)). The short motif at 982–984 (SMA) is the PDZ-binding element.

Belongs to the protein kinase superfamily. Tyr protein kinase family. Ephrin receptor subfamily. Heterotetramer upon binding of the ligand. The heterotetramer is composed of an ephrin dimer and a receptor dimer. Oligomerization is probably required to induce biological responses. In terms of processing, phosphorylated. Autophosphorylation is stimulated by ligands. As to expression, expressed at high levels in the 10-day embryo, and in adult brain, lung, heart and skeletal muscle. Low levels of expression detected in all other adult tissues tested.

It localises to the cell membrane. The protein resides in the early endosome membrane. It is found in the cell projection. Its subcellular location is the dendrite. The catalysed reaction is L-tyrosyl-[protein] + ATP = O-phospho-L-tyrosyl-[protein] + ADP + H(+). Its function is as follows. Receptor tyrosine kinase which binds promiscuously transmembrane ephrin-B family ligands residing on adjacent cells, leading to contact-dependent bidirectional signaling into neighboring cells. The signaling pathway downstream of the receptor is referred to as forward signaling while the signaling pathway downstream of the ephrin ligand is referred to as reverse signaling. May play a role in axon guidance during nervous system development. May also play an important redundant role with other ephrin-B receptors in development and maturation of dendritic spines and synapse formation. More generally, may play a role in targeted cell migration and adhesion. Upon activation by ephrin-B ligands activates the MAPK/ERK and the JNK signaling cascades to regulate cell migration and adhesion respectively. This is Ephrin type-B receptor 1 (EPHB1) from Gallus gallus (Chicken).